We begin with the raw amino-acid sequence, 284 residues long: Capsid assembly scaffolding protein (284 aa).

Residues D19, H48, and S107 contribute to the active site. The stretch at 206–243 (EAVTAVAEHVQEKLSATEQRLAEMETAFSALKQEVTDR) forms a coiled coil. A disordered region spans residues 258–284 (LDHTESLTQQRRSKATGGGGDALMTNC).

This sequence belongs to the P2likevirus scaffolding protein family. Homomultimer. Post-translationally, autocleaves itself into an N-terminal fragment containing the protease activity, that remains in the capsid following maturation.

In terms of biological role, scaffolding protein and protease involved in the icosahedric procapsid assembly. Coassembles with the capsid proteins to form the procapsid, in which the scaffolding protein is found within the external shell of icosahedrally arranged capsid protein subunits. In a subsequent step the scaffolding protein molecules are cleaved by the viral protease activity. The polypeptide is Capsid assembly scaffolding protein (O) (Enterobacteriaceae (Bacteriophage P2)).